A 143-amino-acid chain; its full sequence is Large ribosomal subunit protein uL15 (143 aa).

The disordered stretch occupies residues 1–52; it reads MKLNTLAPAAGSKSAPKRLGRGIGSGLGKTSGKGHKGQKARSGGYHKVGFEG. The segment covering 21-31 has biased composition (gly residues); that stretch reads RGIGSGLGKTS.

Belongs to the universal ribosomal protein uL15 family. As to quaternary structure, part of the 50S ribosomal subunit.

Its function is as follows. Binds to the 23S rRNA. The protein is Large ribosomal subunit protein uL15 of Francisella tularensis subsp. novicida (strain U112).